The chain runs to 358 residues: MERMFPPKKPSTMNSHDRPMCVQGDSGLVLTTDPKPRLRWTVELHERFVDAVTQLGGPDKATPKTIMRVMGVKGLTLYHLKSHLQKFRLGKQPHKEFNDHSIKDGMRASALELQRNTASSSAMIGRNMNEMQIEVQRRLHEQLEVQKHLQLRIEAQGKYMQSILEKAYQTLAGENMASAATNLKGIGPQTIPDMGIMKEFGSPLGFSFQDLDLYGGGGGDQLELQQNMEKPPLDGFMPMNHENLCLGKKRPNPYSGNNGKSPLMWSDDLRLQDLGSCLQDDPFKGDHHHQIQIAPPSLDRGTEMDPMSEIYDSKPEEKKFDASMKLERPSPRRAPLGERMSPMITTGTMAQGRSSPFG.

The interval 1-20 (MERMFPPKKPSTMNSHDRPM) is disordered. Residues 32–92 (TDPKPRLRWT…HLQKFRLGKQ (61 aa)) enclose the HTH myb-type domain. The H-T-H motif DNA-binding region spans 63-88 (PKTIMRVMGVKGLTLYHLKSHLQKFR). Residues 127-171 (NMNEMQIEVQRRLHEQLEVQKHLQLRIEAQGKYMQSILEKAYQTL) are a coiled coil. Positions 139–144 (LHEQLE) match the LHEQLE motif. The tract at residues 310–358 (IYDSKPEEKKFDASMKLERPSPRRAPLGERMSPMITTGTMAQGRSSPFG) is disordered. Basic and acidic residues predominate over residues 311–330 (YDSKPEEKKFDASMKLERPS). Residues 343–358 (MITTGTMAQGRSSPFG) are compositionally biased toward polar residues.

This sequence belongs to the MYB-CC family. Interacts with NSP2. Expressed in leaves, stems, nodules and roots.

The protein localises to the nucleus. Functionally, transcriptional regulator required for Nod-factor-induced gene expression. Transcription activator involved in the induction of NIN and ENOD40 genes, which are required for rhizobial infection and early nodule development. Possesses strong transactivation activity in vitro. Does not seem to contribute to the early steps of the arbuscular mycorrhizal fungus infection and colonization processes in roots. The polypeptide is Myb family transcription factor IPN2 (Lotus japonicus (Lotus corniculatus var. japonicus)).